The sequence spans 267 residues: Undecaprenyl-diphosphatase (267 aa).

Transmembrane regions (helical) follow at residues M1–I21, Q39–F59, S83–F103, L111–V131, A149–I169, F189–M209, L218–L238, and M246–L266.

Belongs to the UppP family.

Its subcellular location is the cell inner membrane. The catalysed reaction is di-trans,octa-cis-undecaprenyl diphosphate + H2O = di-trans,octa-cis-undecaprenyl phosphate + phosphate + H(+). Its function is as follows. Catalyzes the dephosphorylation of undecaprenyl diphosphate (UPP). Confers resistance to bacitracin. The sequence is that of Undecaprenyl-diphosphatase from Aliivibrio fischeri (strain MJ11) (Vibrio fischeri).